Here is a 361-residue protein sequence, read N- to C-terminus: Phospho-N-acetylmuramoyl-pentapeptide-transferase (361 aa).

10 consecutive transmembrane segments (helical) span residues 25–45, 71–91, 94–114, 133–153, 169–189, 200–220, 240–260, 264–284, 289–309, and 338–358; these read TGGA…WIID, TPTM…VLWA, LNPY…VGFY, WRLL…VRLG, VAIN…VGAG, GLAI…SYLA, LSVL…FNAP, IFMG…IAVA, IVLA…IVQV, and QIVI…LSTL.

Belongs to the glycosyltransferase 4 family. MraY subfamily. Mg(2+) serves as cofactor.

It is found in the cell inner membrane. It carries out the reaction UDP-N-acetyl-alpha-D-muramoyl-L-alanyl-gamma-D-glutamyl-meso-2,6-diaminopimeloyl-D-alanyl-D-alanine + di-trans,octa-cis-undecaprenyl phosphate = di-trans,octa-cis-undecaprenyl diphospho-N-acetyl-alpha-D-muramoyl-L-alanyl-D-glutamyl-meso-2,6-diaminopimeloyl-D-alanyl-D-alanine + UMP. It participates in cell wall biogenesis; peptidoglycan biosynthesis. In terms of biological role, catalyzes the initial step of the lipid cycle reactions in the biosynthesis of the cell wall peptidoglycan: transfers peptidoglycan precursor phospho-MurNAc-pentapeptide from UDP-MurNAc-pentapeptide onto the lipid carrier undecaprenyl phosphate, yielding undecaprenyl-pyrophosphoryl-MurNAc-pentapeptide, known as lipid I. This is Phospho-N-acetylmuramoyl-pentapeptide-transferase from Rhodopseudomonas palustris (strain BisB18).